The sequence spans 266 residues: Phosphoethanolamine N-methyltransferase (266 aa).

Residue Gln-18 participates in phosphoethanolamine binding. Residue Tyr-19 is part of the active site. A phosphoethanolamine-binding site is contributed by Tyr-27. S-adenosyl-L-methionine contacts are provided by Ile-36, Ser-37, Gly-63, Asp-85, Ile-86, Asp-110, Ile-111, and Arg-127. His-132 is an active-site residue. 5 residues coordinate phosphoethanolamine: Tyr-160, Tyr-175, Arg-179, Tyr-181, and Lys-247.

The protein belongs to the class I-like SAM-binding methyltransferase superfamily. PEAMT family. In terms of assembly, monomer.

The protein localises to the golgi apparatus membrane. It localises to the cytoplasm. It catalyses the reaction phosphoethanolamine + S-adenosyl-L-methionine = N-methylethanolamine phosphate + S-adenosyl-L-homocysteine + H(+). It carries out the reaction N-methylethanolamine phosphate + S-adenosyl-L-methionine = N,N-dimethylethanolamine phosphate + S-adenosyl-L-homocysteine + H(+). The catalysed reaction is N,N-dimethylethanolamine phosphate + S-adenosyl-L-methionine = phosphocholine + S-adenosyl-L-homocysteine + H(+). The protein operates within phospholipid metabolism; phosphatidylcholine biosynthesis; phosphocholine from phosphoethanolamine. With respect to regulation, inhibited by phosphocholine. Inhibited by hexadecylphosphocholine (miltefosine). Inhibited by S-adenosyl-l-homocysteine. Weakly inhibited in vitro by amodiaquine, chloroquine and primaquine. Inhibited by NSC-158011. In terms of biological role, catalyzes N-methylation of phosphoethanolamine, phosphomonomethylethanolamine and phosphodimethylethanolamine, the three methylation steps required to convert phosphoethanolamine to phosphocholine. Has no ethanolamine- or phosphatidylethanolamine-N-methyltransferase activity. Required for gametocyte development, maturation and transmission to mosquitoes and for oocyst formation in the mosquito midgut. In Plasmodium falciparum (isolate 3D7), this protein is Phosphoethanolamine N-methyltransferase.